Here is a 260-residue protein sequence, read N- to C-terminus: Apolipoprotein A-I (260 aa).

Positions 1–18 (MKFAALALALLLAVGSHA) are cleaved as a signal peptide. Residues 32–63 (ARAVLDVYLTQVKDMSLRAVNQLDDPQYAEFK) are 3 X approximate tandem repeats. Tandem repeats lie at residues 64-85 (TNLA…GSVS) and 87-107 (MTDS…ESLN). A 10 X approximate tandem repeats region spans residues 64–260 (TNLAQRIEEM…EIIAASVTKS (197 aa)). The stretch at 108–118 (VDLEALKSSLA) is one 3; half-length repeat. 5 repeat units span residues 119–140 (PQNE…TLLT), 141–162 (PIYN…TRLE), 163–184 (PVME…AVLM), 185–206 (PMVE…EVVQ), and 207–225 (PYVQ…QAQT). One copy of the 9; half-length repeat lies at 226–236 (VDTDALRTKIT). Repeat unit 10 spans residues 237 to 260 (PLVEEIKVKMNAIFEIIAASVTKS).

This sequence belongs to the apolipoprotein A1/A4/E family. In terms of tissue distribution, strong expression in liver with lower expression in intestine.

Its subcellular location is the secreted. Participates in the reverse transport of cholesterol from tissues to the liver for excretion by promoting cholesterol efflux from tissues and by acting as a cofactor for the lecithin cholesterol acyltransferase (LCAT). This chain is Apolipoprotein A-I (apoa1), found in Sparus aurata (Gilthead sea bream).